Consider the following 294-residue polypeptide: 2-oxo-3-(phosphooxy)propyl 3-oxoalkanoate synthase (294 aa).

Belongs to the AfsA family.

It catalyses the reaction a medium-chain 3-oxoacyl-[ACP] + dihydroxyacetone phosphate = a (4-alkanoyl-5-oxo-2,5-dihydrofuran-3-yl)methyl phosphate + holo-[ACP] + H2O. Involved in the biosynthesis of virginiae butanolide (VB), a gamma-butyrolactone autoregulator that triggers the production of the streptogramin antibiotic virginiamycin. The chain is 2-oxo-3-(phosphooxy)propyl 3-oxoalkanoate synthase from Streptomyces virginiae (Streptomyces cinnamonensis).